The sequence spans 712 residues: Glycine--tRNA ligase beta subunit (712 aa).

Belongs to the class-II aminoacyl-tRNA synthetase family. As to quaternary structure, tetramer of two alpha and two beta subunits.

Its subcellular location is the cytoplasm. It catalyses the reaction tRNA(Gly) + glycine + ATP = glycyl-tRNA(Gly) + AMP + diphosphate. The chain is Glycine--tRNA ligase beta subunit from Acaryochloris marina (strain MBIC 11017).